We begin with the raw amino-acid sequence, 162 residues long: UPF0260 protein Caul_3920 (162 aa).

It belongs to the UPF0260 family.

This is UPF0260 protein Caul_3920 from Caulobacter sp. (strain K31).